The sequence spans 776 residues: Hepatocyte growth factor-regulated tyrosine kinase substrate (776 aa).

The region spanning 15–143 (ATSQLLLETD…IMKVEGHVFP (129 aa)) is the VHS domain. The segment at 160 to 220 (WVDAEECHRC…VCEPCYEQLN (61 aa)) adopts an FYVE-type zinc-finger fold. Residues Cys166, Cys169, Cys182, Cys185, Cys190, and Cys193 each contribute to the Zn(2+) site. An N6-acetyllysine modification is found at Lys207. Zn(2+) is bound by residues Cys212 and Cys215. A Phosphotyrosine modification is found at Tyr216. The disordered stretch occupies residues 223–319 (AEGKAASTTE…SPVNSSAPLA (97 aa)). The interval 225-542 (GKAASTTELP…QRLQEQEKER (318 aa)) is interaction with SNX1. The UIM domain maps to 258 to 277 (QEEEELQLALALSQSEAEEK). Residues 294 to 311 (PAPLASSAPPAGSLYSSP) show a composition bias toward low complexity. Residues Tyr308, Tyr329, and Tyr334 each carry the phosphotyrosine modification. The segment at 338-401 (KQEEARKSPT…SEQYQNGESE (64 aa)) is disordered. A compositionally biased stretch (polar residues) spans 379–398 (TDSQPITSCSGPFSEQYQNG). Residues 444–542 (SINSTHPQLL…QRLQEQEKER (99 aa)) are interaction with SNAP25 and TRAK2. The interval 453–571 (LELLNRLDER…FPLPYAQLQA (119 aa)) is interaction with STAM. An interaction with NF2 region spans residues 479–776 (ARGALSALRE…GNETQLISFD (298 aa)). An N6-succinyllysine modification is found at Lys550. The disordered stretch occupies residues 719 to 776 (GQDASLPAQQPYITGQQPMYQQMAPSTGPPQQQPPVAQPPPTQGPPAQGNETQLISFD). Residues 725 to 743 (PAQQPYITGQQPMYQQMAP) show a composition bias toward polar residues. Residues 745-762 (TGPPQQQPPVAQPPPTQG) show a composition bias toward pro residues. Polar residues predominate over residues 767-776 (GNETQLISFD).

In terms of assembly, component of the ESCRT-0 complex composed of STAM or STAM2 and HGS. Part of a complex at least composed of HSG, STAM2 (or probably STAM) and EPS15. Interacts with STAM. Interacts with STAM2. Interacts with EPS15; the interaction is direct, calcium-dependent and inhibited by SNAP25. Identified in a complex with STAM and LITAF. Found in a complex with STAM and E3 ligase ITCH and DTX3L. Interacts with E3 ligase DTX3L; the interaction brings together STAM and HSG, promotes their recruitment to early endosomes and decreases STAM and HGS ubiquitination by ITCH. Interacts with NF2; the interaction is direct. Interacts with ubiquitin; the interaction is direct. Interacts with VPS37C. Interacts with SMAD1, SMAD2 and SMAD3. Interacts with TSG101; the interaction mediates the association with the ESCRT-I complex. Interacts with SNAP25; the interaction is direct and decreases with addition of increasing concentrations of free calcium. Interacts with SNX1; the interaction is direct. Component of a 550 kDa membrane complex at least composed of HGS and SNX1 but excluding EGFR. Interacts with TRAK2. Interacts with TRAK1. Component of the CART complex, at least composed of ACTN4, HGS/HRS, MYO5B and TRIM3. Interacts (via UIM domain) with UBQLN1 (via ubiquitin-like domain). Interacts with ARRDC3. Identified in a complex containing at least ARRDC4, AVPR2 and HGS. Interacts with LAPTM4B; promotes HGS ubiquitination. Post-translationally, phosphorylated on Tyr-334. This phosphorylation occurs in response to EGF. A minor site of phosphorylation on Tyr-329 is detected. Protein phosphorylation may also be triggered in response to IL-2, GM-CSF and HGF. In terms of processing, ubiquitinated by ITCH. In terms of tissue distribution, ubiquitously expressed.

It localises to the cytoplasm. The protein localises to the early endosome membrane. Its subcellular location is the endosome. It is found in the multivesicular body membrane. Functionally, involved in intracellular signal transduction mediated by cytokines and growth factors. When associated with STAM, it suppresses DNA signaling upon stimulation by IL-2 and GM-CSF. Could be a direct effector of PI3-kinase in vesicular pathway via early endosomes and may regulate trafficking to early and late endosomes by recruiting clathrin. May concentrate ubiquitinated receptors within clathrin-coated regions. Involved in down-regulation of receptor tyrosine kinase via multivesicular body (MVBs) when complexed with STAM (ESCRT-0 complex). The ESCRT-0 complex binds ubiquitin and acts as a sorting machinery that recognizes ubiquitinated receptors and transfers them to further sequential lysosomal sorting/trafficking processes. Involved in receptor recycling via its association with the CART complex, a multiprotein complex required for efficient transferrin receptor recycling but not for EGFR degradation. May contribute to the efficient recruitment of SMADs to the activin receptor complex. The polypeptide is Hepatocyte growth factor-regulated tyrosine kinase substrate (Hgs) (Rattus norvegicus (Rat)).